A 246-amino-acid polypeptide reads, in one-letter code: tRNA (guanine-N(1)-)-methyltransferase (246 aa).

S-adenosyl-L-methionine contacts are provided by residues Gly114 and 134–139 (IGDYIL). A compositionally biased stretch (basic and acidic residues) spans 219 to 231 (LRRPDLWERHEGA). The tract at residues 219 to 246 (LRRPDLWERHEGARAQSPSGARRQKKER) is disordered.

Belongs to the RNA methyltransferase TrmD family. In terms of assembly, homodimer.

It is found in the cytoplasm. The enzyme catalyses guanosine(37) in tRNA + S-adenosyl-L-methionine = N(1)-methylguanosine(37) in tRNA + S-adenosyl-L-homocysteine + H(+). Specifically methylates guanosine-37 in various tRNAs. The sequence is that of tRNA (guanine-N(1)-)-methyltransferase from Rhizorhabdus wittichii (strain DSM 6014 / CCUG 31198 / JCM 15750 / NBRC 105917 / EY 4224 / RW1) (Sphingomonas wittichii).